An 87-amino-acid chain; its full sequence is UPF0213 protein SSA_0709 (87 aa).

A GIY-YIG domain is found at 3 to 78 (NKAYMYVLEC…KKKTRQAKLA (76 aa)).

The protein belongs to the UPF0213 family.

This chain is UPF0213 protein SSA_0709, found in Streptococcus sanguinis (strain SK36).